We begin with the raw amino-acid sequence, 178 residues long: UPF0215 protein STK_03040 (178 aa).

This sequence belongs to the UPF0215 family.

This Sulfurisphaera tokodaii (strain DSM 16993 / JCM 10545 / NBRC 100140 / 7) (Sulfolobus tokodaii) protein is UPF0215 protein STK_03040.